We begin with the raw amino-acid sequence, 172 residues long: Translation initiation factor IF-3 (172 aa).

It belongs to the IF-3 family. As to quaternary structure, monomer.

The protein localises to the cytoplasm. Functionally, IF-3 binds to the 30S ribosomal subunit and shifts the equilibrium between 70S ribosomes and their 50S and 30S subunits in favor of the free subunits, thus enhancing the availability of 30S subunits on which protein synthesis initiation begins. This Lactobacillus johnsonii (strain CNCM I-12250 / La1 / NCC 533) protein is Translation initiation factor IF-3.